Here is a 192-residue protein sequence, read N- to C-terminus: Rho-related protein racC (192 aa).

Position 13 to 20 (13 to 20) interacts with GTP; sequence GDGAVGKT. An Effector region motif is present at residues 35–43; it reads YIPTVFDNY. GTP is bound by residues 60 to 64 and 118 to 121; these read DTAGQ and TKLD. Cys-189 bears the Cysteine methyl ester mark. Cys-189 is lipidated: S-geranylgeranyl cysteine. Residues 190-192 constitute a propeptide, removed in mature form; sequence IVM.

The protein belongs to the small GTPase superfamily. Rho family. Interacts with pakB.

The protein resides in the cell membrane. This Dictyostelium discoideum (Social amoeba) protein is Rho-related protein racC (racC).